Consider the following 793-residue polypeptide: Probable alpha-fucosidase A (793 aa).

The first 20 residues, 1–20 (MLISGSSAALCALALPFAAA), serve as a signal peptide directing secretion. N-linked (GlcNAc...) asparagine glycans are attached at residues asparagine 30, asparagine 83, asparagine 100, asparagine 104, asparagine 123, asparagine 179, asparagine 199, asparagine 234, asparagine 323, asparagine 597, asparagine 622, asparagine 660, and asparagine 757.

The protein belongs to the glycosyl hydrolase 95 family.

It localises to the secreted. It carries out the reaction an alpha-L-fucoside + H2O = L-fucose + an alcohol. In terms of biological role, alpha-fucosidase involved in degradation of fucosylated xyloglucans. Hydrolyzes alpha-1,2-linked fucose. The chain is Probable alpha-fucosidase A (afcA) from Aspergillus niger (strain ATCC MYA-4892 / CBS 513.88 / FGSC A1513).